Here is a 415-residue protein sequence, read N- to C-terminus: Multidrug resistance protein MdtA (415 aa).

The first 21 residues, 1–21 (MKGSYKSRWVIVIVVVIAAIA), serve as a signal peptide directing secretion. Disordered stretches follow at residues 32 to 60 (SRSA…GPLA) and 392 to 415 (EAQS…GARS). Positions 399 to 415 (PEEKATSREYAKKGARS) are enriched in basic and acidic residues.

This sequence belongs to the membrane fusion protein (MFP) (TC 8.A.1) family. Part of a tripartite efflux system composed of MdtA, MdtB and MdtC.

It is found in the cell inner membrane. Its function is as follows. The MdtABC tripartite complex confers resistance against novobiocin and deoxycholate. This is Multidrug resistance protein MdtA from Escherichia coli O81 (strain ED1a).